The chain runs to 78 residues: U23-theraphotoxin-Cg1a 1 (78 aa).

The N-terminal stretch at 1–21 (MKTSVLVTVLGLAVISVLCSA) is a signal peptide. Residues 22 to 49 (SQDEEQDMYDELLSAVFEVNDELQSEAR) constitute a propeptide that is removed on maturation. Cystine bridges form between Cys50–Cys64, Cys57–Cys69, and Cys63–Cys75.

The protein belongs to the neurotoxin 10 (Hwtx-1) family. 64 (Jztx-20) subfamily. Expressed by the venom gland.

It localises to the secreted. Functionally, probable ion channel inhibitor. This Chilobrachys guangxiensis (Chinese earth tiger tarantula) protein is U23-theraphotoxin-Cg1a 1.